The primary structure comprises 186 residues: 2-oxoglutarate synthase subunit KorC (186 aa).

As to quaternary structure, heterotetramer of the KorA, KorB, KorC and KorD subunits.

It carries out the reaction 2 oxidized [2Fe-2S]-[ferredoxin] + 2-oxoglutarate + CoA = succinyl-CoA + 2 reduced [2Fe-2S]-[ferredoxin] + CO2 + H(+). The polypeptide is 2-oxoglutarate synthase subunit KorC (korC) (Methanothermobacter marburgensis (strain ATCC BAA-927 / DSM 2133 / JCM 14651 / NBRC 100331 / OCM 82 / Marburg) (Methanobacterium thermoautotrophicum)).